A 513-amino-acid polypeptide reads, in one-letter code: Na(+)/H(+) antiporter NhaB (513 aa).

A run of 12 helical transmembrane segments spans residues 23 to 43 (LALI…PFVA), 52 to 72 (IFTL…LLAI), 97 to 117 (LLLM…LFIF), 120 to 140 (LLLS…AAAF), 144 to 164 (FLDA…FYGI), 202 to 222 (LMMH…VGEP), 238 to 258 (FFLR…LTCL), 303 to 323 (AIIG…VGLI), 348 to 368 (TESL…AVII), 391 to 411 (LFYI…VGTI), 447 to 467 (ATPN…APLI), and 475 to 495 (VWMA…CVEF).

This sequence belongs to the NhaB Na(+)/H(+) (TC 2.A.34) antiporter family.

The protein resides in the cell inner membrane. The enzyme catalyses 2 Na(+)(in) + 3 H(+)(out) = 2 Na(+)(out) + 3 H(+)(in). In terms of biological role, na(+)/H(+) antiporter that extrudes sodium in exchange for external protons. This Escherichia coli O6:K15:H31 (strain 536 / UPEC) protein is Na(+)/H(+) antiporter NhaB.